The following is a 216-amino-acid chain: Adenylate kinase (216 aa).

Residue 10-15 (GAGKGT) participates in ATP binding. The NMP stretch occupies residues 30-59 (STGDMLRAAVNAGTEVGKRAKAVMDAGKLV). AMP-binding positions include Thr-31, Arg-36, 57–59 (KLV), 85–88 (GFPR), and Gln-92. Residues 126 to 163 (GRYTCAQCGTVYHDTDKVPVEEGVCDKCGSTHFKRRPD) form an LID region. An ATP-binding site is contributed by Arg-127. Residues Cys-130 and Cys-133 each coordinate Zn(2+). 136–137 (VY) contacts ATP. Cys-150 and Cys-153 together coordinate Zn(2+). 2 residues coordinate AMP: Arg-160 and Arg-172. Residue Ala-200 participates in ATP binding.

It belongs to the adenylate kinase family. As to quaternary structure, monomer.

It is found in the cytoplasm. The enzyme catalyses AMP + ATP = 2 ADP. It participates in purine metabolism; AMP biosynthesis via salvage pathway; AMP from ADP: step 1/1. Its function is as follows. Catalyzes the reversible transfer of the terminal phosphate group between ATP and AMP. Plays an important role in cellular energy homeostasis and in adenine nucleotide metabolism. This Rhizobium etli (strain ATCC 51251 / DSM 11541 / JCM 21823 / NBRC 15573 / CFN 42) protein is Adenylate kinase.